The chain runs to 418 residues: Serine--tRNA ligase (418 aa).

Residue 228–230 (TSE) participates in L-serine binding. ATP contacts are provided by residues 258-260 (RKE) and V274. E281 contacts L-serine. 345–348 (EVVS) lines the ATP pocket. T381 contributes to the L-serine binding site.

Belongs to the class-II aminoacyl-tRNA synthetase family. Type-1 seryl-tRNA synthetase subfamily. As to quaternary structure, homodimer. The tRNA molecule binds across the dimer.

It is found in the cytoplasm. The catalysed reaction is tRNA(Ser) + L-serine + ATP = L-seryl-tRNA(Ser) + AMP + diphosphate + H(+). It catalyses the reaction tRNA(Sec) + L-serine + ATP = L-seryl-tRNA(Sec) + AMP + diphosphate + H(+). It functions in the pathway aminoacyl-tRNA biosynthesis; selenocysteinyl-tRNA(Sec) biosynthesis; L-seryl-tRNA(Sec) from L-serine and tRNA(Sec): step 1/1. Catalyzes the attachment of serine to tRNA(Ser). Is also able to aminoacylate tRNA(Sec) with serine, to form the misacylated tRNA L-seryl-tRNA(Sec), which will be further converted into selenocysteinyl-tRNA(Sec). The chain is Serine--tRNA ligase from Cenarchaeum symbiosum (strain A).